The following is a 287-amino-acid chain: Protein PXR1 (287 aa).

Positions 25-72 (TSRFGHLQLEKFGWKPGMGLGMSPTSSHKTHIKVSIKDDNLGLGAKIK) constitute a G-patch domain. Over residues 143–155 (LKSYSNDKKRSRD) the composition is skewed to basic and acidic residues. The disordered stretch occupies residues 143 to 254 (LKSYSNDKKR…TTASNIPSTV (112 aa)). Over residues 163-190 (SKNKSKKQKKDKKDKKDKKDKKDKKDKK) the composition is skewed to basic residues. The span at 191 to 200 (DKKDKTEKKE) shows a compositional bias: basic and acidic residues. Basic residues predominate over residues 201 to 220 (KKEKKEKKEKKEKKDKKDKK). Residues 221-230 (DKKDKIDKKD) are compositionally biased toward basic and acidic residues. Positions 239–251 (NNIEVSTTASNIP) are enriched in polar residues.

This sequence belongs to the PINX1 family.

It localises to the nucleus. Its subcellular location is the nucleolus. Involved in rRNA-processing at A0, A1 and A2 sites and negatively regulates telomerase. This chain is Protein PXR1 (PXR1), found in Vanderwaltozyma polyspora (strain ATCC 22028 / DSM 70294 / BCRC 21397 / CBS 2163 / NBRC 10782 / NRRL Y-8283 / UCD 57-17) (Kluyveromyces polysporus).